We begin with the raw amino-acid sequence, 515 residues long: Ecdysteroid UDP-glucosyltransferase (515 aa).

The first 31 residues, 1-31 (MKMIILVVSLHVLRNSAAVRVLCMFPTPSYS), serve as a signal peptide directing secretion.

Belongs to the UDP-glycosyltransferase family.

Functionally, catalyzes the transfer of glucose from UDP-glucose to ecdysteroids which are insect molting hormones. Expression of egt interferes with normal insect development and block molting. The chain is Ecdysteroid UDP-glucosyltransferase (EGT) from Spodoptera littoralis nuclear polyhedrosis virus (SlNPV).